Here is a 415-residue protein sequence, read N- to C-terminus: MTELIKKGSGAKEASQFLAQATTKHKNAALLNLSNDLLIHTATLLQENEKDILRAQQKGTPETMIDRLRLTEERIKEISEAVKQVVALKDPIGEVTNMWKNEAELTIGKTRVPLGVIGIIYESRPNVTVDASVLCFKTGNAVILRGGSDAIDSNKALMSVIQDSLEASGFPRSSVQLIEDTSRETARDMMRLNRFLDVLIPRGGARLIQTVLENATVPVIETGTGNCHIYVDKAAEKQMAIDILVNAKCSRPSVCNAAETLLIHRDVAEDYLPAMETALKEYDVELRADERAKGILQEAKAATESDWEDEFLDFILAIKVVDSAEEAIDHINKYGTKHSEAIISNDYATGQAFHQKVDAAAVYINASTRFTDGFAMGFGAEIGISTQKLHARGPMGLTELTSTKYIIFGDGQIRN.

This sequence belongs to the gamma-glutamyl phosphate reductase family.

It is found in the cytoplasm. It catalyses the reaction L-glutamate 5-semialdehyde + phosphate + NADP(+) = L-glutamyl 5-phosphate + NADPH + H(+). Its pathway is amino-acid biosynthesis; L-proline biosynthesis; L-glutamate 5-semialdehyde from L-glutamate: step 2/2. Catalyzes the NADPH-dependent reduction of L-glutamate 5-phosphate into L-glutamate 5-semialdehyde and phosphate. The product spontaneously undergoes cyclization to form 1-pyrroline-5-carboxylate. The sequence is that of Gamma-glutamyl phosphate reductase from Listeria monocytogenes serotype 4b (strain F2365).